The following is a 223-amino-acid chain: Homeobox protein egl-5 (223 aa).

A compositionally biased stretch (low complexity) spans 1-25 (MNTSTSAFDFGSSTASSAATSTTSS). Disordered regions lie at residues 1–58 (MNTS…STEA) and 168–191 (KKEK…PPKG). Residues 112-171 (SKKGRQTYQRYQTSVLEAKFQQSSYVSKKQREELRLQTQLTDRQIKIWFQNRRMKAKKEK) constitute a DNA-binding region (homeobox).

Belongs to the Abd-B homeobox family. As to quaternary structure, interacts with the TCF transcription factor pop-1.

The protein localises to the nucleus. Its function is as follows. Involved in control of cell fate and pattern formation along the anterior-posterior axis, acting mainly in the tail. Required during embryonic and postembryonic development. Essential for the determination of specific neurons, including the PLM touch neurons. Plays a role in neural fate specification in the hermaphrodite-specific neuron (HSN)/PHB neuron lineage, acting in concert with T-box protein tbx-2 and the asymmetric cell division protein ham-1. Required for male gonadal fate determination, acting in parallel with a WNT/beta-catenin pathway, perhaps by recruiting pop-1 to male-specific gonadal target genes. Involved in development of the hermaphrodite hindgut, and for the response to rectal infection by the coryneform bacterium M.nematophilum. The chain is Homeobox protein egl-5 from Caenorhabditis elegans.